The following is a 648-amino-acid chain: Threonine--tRNA ligase (648 aa).

Residues 1–61 (MINITFPDGA…DTDGSIEIVT (61 aa)) enclose the TGS domain. Residues 242–540 (DHRKLGKELD…LIETYKGAFP (299 aa)) form a catalytic region. Residues Cys336, His387, and His517 each coordinate Zn(2+).

The protein belongs to the class-II aminoacyl-tRNA synthetase family. Homodimer. The cofactor is Zn(2+).

It is found in the cytoplasm. It carries out the reaction tRNA(Thr) + L-threonine + ATP = L-threonyl-tRNA(Thr) + AMP + diphosphate + H(+). Functionally, catalyzes the attachment of threonine to tRNA(Thr) in a two-step reaction: L-threonine is first activated by ATP to form Thr-AMP and then transferred to the acceptor end of tRNA(Thr). Also edits incorrectly charged L-seryl-tRNA(Thr). The sequence is that of Threonine--tRNA ligase from Streptococcus uberis (strain ATCC BAA-854 / 0140J).